Consider the following 113-residue polypeptide: Putative glycerol transporter Lin0367 (113 aa).

Transmembrane regions (helical) follow at residues 3–23, 30–50, 63–83, and 92–112; these read IGIA…IRMM, EWGA…VWTI, GTVW…ASLL, and VVNL…LSLF.

The protein resides in the membrane. In terms of biological role, could be involved in the glycerol uptake either via facilitated diffusion or active transport. This Listeria innocua serovar 6a (strain ATCC BAA-680 / CLIP 11262) protein is Putative glycerol transporter Lin0367.